A 918-amino-acid polypeptide reads, in one-letter code: Chaperone protein ClpC4, chloroplastic (918 aa).

The interval 266–515 (LMEYGTNLTK…RLRNAQCKPS (250 aa)) is i. ATP-binding positions include 311–318 (GEPGVGKT) and 653–660 (GPTGVGKS). The tract at residues 579 to 774 (VTEDDVRHAI…LIVMTTNIGS (196 aa)) is II.

It belongs to the ClpA/ClpB family. ClpC subfamily.

It is found in the plastid. Its subcellular location is the chloroplast. Functionally, molecular chaperone that may interact with a ClpP-like protease involved in degradation of denatured proteins in the chloroplast. The protein is Chaperone protein ClpC4, chloroplastic (CPLC4) of Oryza sativa subsp. japonica (Rice).